Reading from the N-terminus, the 359-residue chain is Membrane-bound lytic murein transglycosylase C (359 aa).

The signal sequence occupies residues 1-16; sequence MKKYLALALIAPLLIS. A lipid anchor (N-palmitoyl cysteine) is attached at Cys17. A lipid anchor (S-diacylglycerol cysteine) is attached at Cys17.

It belongs to the transglycosylase Slt family.

The protein localises to the cell outer membrane. It catalyses the reaction Exolytic cleavage of the (1-&gt;4)-beta-glycosidic linkage between N-acetylmuramic acid (MurNAc) and N-acetylglucosamine (GlcNAc) residues in peptidoglycan, from either the reducing or the non-reducing ends of the peptidoglycan chains, with concomitant formation of a 1,6-anhydrobond in the MurNAc residue.. Murein-degrading enzyme. May play a role in recycling of muropeptides during cell elongation and/or cell division. The sequence is that of Membrane-bound lytic murein transglycosylase C from Shigella dysenteriae serotype 1 (strain Sd197).